Reading from the N-terminus, the 922-residue chain is Coronin-7 (922 aa).

WD repeat units follow at residues 75–115 (CHSD…EALP), 124–163 (PEEL…HLTE), 166–205 (AHKD…QASQ), and 209–253 (AHEN…SALA). The tract at residues 386–462 (NPAHRPHPRF…TSPSQRSLQS (77 aa)) is disordered. Positions 423 to 456 (SEGFSSPSSLVSPSTPSSLGLSLSSTSGIGTSPS) are enriched in low complexity. 2 positions are modified to phosphoserine: S459 and S462. A Glycyl lysine isopeptide (Lys-Gly) (interchain with G-Cter in ubiquitin) cross-link involves residue K469. WD repeat units lie at residues 539–579 (QNGA…LKNV), 589–629 (GHTE…EQLR), 632–671 (GHQD…LPLQ), and 725–765 (DVAP…PFFL). The segment at 854-922 (LQPPGMTPVS…FEGVDEDEWD (69 aa)) is disordered. T874 carries the phosphothreonine modification. A compositionally biased stretch (basic and acidic residues) spans 881-893 (LEEKSDQQKKEEL). S912 carries the phosphoserine modification.

Belongs to the WD repeat coronin family. In terms of assembly, interacts with clathrin adapter AP1 complex. This interaction takes place at Golgi membranes and not AP1-positive endosomal membranes. Interacts (when ubiquitinated at Lys-469) with EPS15. In terms of processing, the membrane-associated form is phosphorylated on tyrosine residues. Ubiquitinated via 'Lys-33'-linked ubiquitin chains by the BCR(KLHL20) E3 ubiquitin ligase complex: 'Lys-33'-linked ubiquitination promotes interaction with EPS15 and facilitates actin polymerization at the trans-Golgi network, thereby facilitating post-Golgi trafficking. Deubiquitinated by ZRANB1/TRABID.

The protein resides in the golgi apparatus membrane. The protein localises to the golgi apparatus. It is found in the trans-Golgi network. Its subcellular location is the cytoplasmic vesicle. It localises to the cytoplasm. The protein resides in the cytosol. F-actin regulator involved in anterograde Golgi to endosome transport: upon ubiquitination via 'Lys-33'-linked ubiquitin chains by the BCR(KLHL20) E3 ubiquitin ligase complex, interacts with EPS15 and localizes to the trans-Golgi network, where it promotes actin polymerization, thereby facilitating post-Golgi trafficking. May play a role in the maintenance of the Golgi apparatus morphology. This is Coronin-7 (Coro7) from Rattus norvegicus (Rat).